The primary structure comprises 335 residues: Glyceraldehyde-3-phosphate dehydrogenase 2 (335 aa).

NAD(+) contacts are provided by residues 13–14, Asp-35, and Arg-80; that span reads RI. A phosphoserine mark is found at Ser-125 and Ser-151. D-glyceraldehyde 3-phosphate is bound at residue 151-153; it reads SCT. Residue Cys-152 is the Nucleophile of the active site. A phosphothreonine mark is found at Thr-153, Thr-154, Thr-182, and Thr-184. Thr-182 lines the D-glyceraldehyde 3-phosphate pocket. A phosphoserine mark is found at Ser-192, Ser-203, and Ser-209. Phosphothreonine is present on Thr-211. D-glyceraldehyde 3-phosphate contacts are provided by residues 211 to 212 and Arg-234; that span reads TG. Thr-237 bears the Phosphothreonine mark. Position 241 is a phosphoserine (Ser-241). An NAD(+)-binding site is contributed by Asn-316.

Belongs to the glyceraldehyde-3-phosphate dehydrogenase family. In terms of assembly, homotetramer.

It localises to the cytoplasm. It catalyses the reaction D-glyceraldehyde 3-phosphate + phosphate + NAD(+) = (2R)-3-phospho-glyceroyl phosphate + NADH + H(+). Its pathway is carbohydrate degradation; glycolysis; pyruvate from D-glyceraldehyde 3-phosphate: step 1/5. The chain is Glyceraldehyde-3-phosphate dehydrogenase 2 (gpd3) from Schizosaccharomyces pombe (strain 972 / ATCC 24843) (Fission yeast).